Here is a 448-residue protein sequence, read N- to C-terminus: MRVSRYFGTDGIRGRVGQGLISADFVLRLGNALGRVLAQGRDTRPMVLIGKDTRISGYMFESALEAGLVAAGADVQLIGPMPTPAIAFLTNTLRADAGVVISASHNPHDDNGIKFFSAMGEKLDDATEAAIEAAIEAPFLTVDSEYLGKVKRTRDAIGRYIEFSKASVPRGFTLRGLKLVLDCAHGATYHIAPMLFRELGAELVTIGVDPDGLNINAGVGSTHLETLAATVRESGADLGIAFDGDGDRVLMTDAQGRTVDGDDLLYVLARAWRASGRLKGTVVGTLMSNYGLEQALGTLGIPFIRARVGDRYVHQALVESGGVLGGEASGHLLCLDRATTGDGIVSALQVLEVLRHEGLTLSQALLGLHKVPQKTVNVCWSGPARAAVEMPEVRQALVEAQAAVQGRGRVFLRPSGTEPVVRITVEADDVVLMQQTLDRLADVVRDAA.

The active-site Phosphoserine intermediate is serine 104. Mg(2+)-binding residues include serine 104, aspartate 243, aspartate 245, and aspartate 247. Residue serine 104 is modified to Phosphoserine.

Belongs to the phosphohexose mutase family. It depends on Mg(2+) as a cofactor. Post-translationally, activated by phosphorylation.

It carries out the reaction alpha-D-glucosamine 1-phosphate = D-glucosamine 6-phosphate. Its function is as follows. Catalyzes the conversion of glucosamine-6-phosphate to glucosamine-1-phosphate. The chain is Phosphoglucosamine mutase from Xylella fastidiosa (strain Temecula1 / ATCC 700964).